Reading from the N-terminus, the 229-residue chain is 2-phytyl-1,4-naphtoquinone methyltransferase (229 aa).

It belongs to the class I-like SAM-binding methyltransferase superfamily. MenG/UbiE family.

It carries out the reaction demethylphylloquinol + S-adenosyl-L-methionine = phylloquinol + S-adenosyl-L-homocysteine + H(+). Its pathway is cofactor biosynthesis; phylloquinone biosynthesis. Its function is as follows. Methyltransferase required for the conversion of 2-phytyl-1,4-beta-naphthoquinol to phylloquinol. This Trichormus variabilis (strain ATCC 29413 / PCC 7937) (Anabaena variabilis) protein is 2-phytyl-1,4-naphtoquinone methyltransferase.